The primary structure comprises 246 residues: Ubiquinone biosynthesis O-methyltransferase (246 aa).

S-adenosyl-L-methionine contacts are provided by arginine 40, glycine 70, aspartate 91, and methionine 135.

The protein belongs to the methyltransferase superfamily. UbiG/COQ3 family.

The enzyme catalyses a 3-demethylubiquinol + S-adenosyl-L-methionine = a ubiquinol + S-adenosyl-L-homocysteine + H(+). The catalysed reaction is a 3-(all-trans-polyprenyl)benzene-1,2-diol + S-adenosyl-L-methionine = a 2-methoxy-6-(all-trans-polyprenyl)phenol + S-adenosyl-L-homocysteine + H(+). It participates in cofactor biosynthesis; ubiquinone biosynthesis. O-methyltransferase that catalyzes the 2 O-methylation steps in the ubiquinone biosynthetic pathway. The sequence is that of Ubiquinone biosynthesis O-methyltransferase from Colwellia psychrerythraea (strain 34H / ATCC BAA-681) (Vibrio psychroerythus).